The following is a 72-amino-acid chain: NAD(P)H-quinone oxidoreductase subunit O (72 aa).

Belongs to the complex I NdhO subunit family. In terms of assembly, NDH-1 can be composed of about 15 different subunits; different subcomplexes with different compositions have been identified which probably have different functions.

The protein resides in the cellular thylakoid membrane. The enzyme catalyses a plastoquinone + NADH + (n+1) H(+)(in) = a plastoquinol + NAD(+) + n H(+)(out). The catalysed reaction is a plastoquinone + NADPH + (n+1) H(+)(in) = a plastoquinol + NADP(+) + n H(+)(out). Functionally, NDH-1 shuttles electrons from an unknown electron donor, via FMN and iron-sulfur (Fe-S) centers, to quinones in the respiratory and/or the photosynthetic chain. The immediate electron acceptor for the enzyme in this species is believed to be plastoquinone. Couples the redox reaction to proton translocation, and thus conserves the redox energy in a proton gradient. Cyanobacterial NDH-1 also plays a role in inorganic carbon-concentration. The protein is NAD(P)H-quinone oxidoreductase subunit O of Gloeothece citriformis (strain PCC 7424) (Cyanothece sp. (strain PCC 7424)).